A 1668-amino-acid polypeptide reads, in one-letter code: Probable histone acetyltransferase HAC-like 1 (1668 aa).

3 disordered regions span residues 1 to 34, 459 to 493, and 528 to 551; these read MNVG…ADGL, QQQP…SEQG, and KGGQ…HDSQ. The segment covering 11-23 has biased composition (polar residues); it reads GQMSGQAPQTNQV. Positions 459–469 are enriched in low complexity; the sequence is QQQPNSQHQQS. Polar residues-rich tracts occupy residues 470–491 and 536–551; these read ILRS…QLSE and LSSS…HDSQ. A TAZ-type 1 zinc finger spans residues 651–732; it reads AAGNIYYFRQ…DLQCPVCSNA (82 aa). Over residues 886-899 the composition is skewed to basic and acidic residues; it reads KETSETAPEVKNEA. The disordered stretch occupies residues 886–912; it reads KETSETAPEVKNEANDSTDITVSKSGK. Polar residues predominate over residues 900-909; it reads NDSTDITVSK. A PHD-type zinc finger spans residues 1002-1079; the sequence is HFFCIPCYNE…EYTCPNCYVE (78 aa). One can recognise a CBP/p300-type HAT domain in the interval 1094 to 1530; it reads VLGAKDLPRT…VLYHLHNPTA (437 aa). Acetyl-CoA is bound by residues 1217 to 1219, 1236 to 1237, and W1292; these read LDS and RT. The stretch at 1342 to 1365 forms a coiled coil; it reads GAAEDMINQLRQEEDDRKQQKKGK. A ZZ-type zinc finger spans residues 1412–1475; that stretch reads HLQYSCSHCC…TLHPVDIVGL (64 aa). Zn(2+) is bound by residues C1417, C1420, C1432, C1435, C1441, C1444, H1457, and H1465. The TAZ-type 2 zinc finger occupies 1553–1634; the sequence is EVCPDFDLRK…GCNVPRCRDL (82 aa). The stretch at 1630 to 1650 forms a coiled coil; that stretch reads RCRDLKEHLRRLQQQSDSRRR.

It is found in the nucleus. It carries out the reaction L-lysyl-[protein] + acetyl-CoA = N(6)-acetyl-L-lysyl-[protein] + CoA + H(+). Acetyltransferase enzyme. Acetylates histones, giving a specific tag for transcriptional activation. This Oryza sativa subsp. japonica (Rice) protein is Probable histone acetyltransferase HAC-like 1.